Reading from the N-terminus, the 396-residue chain is NADH-quinone oxidoreductase subunit D (396 aa).

The protein belongs to the complex I 49 kDa subunit family. In terms of assembly, NDH-1 is composed of 14 different subunits. Subunits NuoB, C, D, E, F, and G constitute the peripheral sector of the complex.

The protein resides in the cell inner membrane. It carries out the reaction a quinone + NADH + 5 H(+)(in) = a quinol + NAD(+) + 4 H(+)(out). In terms of biological role, NDH-1 shuttles electrons from NADH, via FMN and iron-sulfur (Fe-S) centers, to quinones in the respiratory chain. The immediate electron acceptor for the enzyme in this species is believed to be ubiquinone. Couples the redox reaction to proton translocation (for every two electrons transferred, four hydrogen ions are translocated across the cytoplasmic membrane), and thus conserves the redox energy in a proton gradient. The sequence is that of NADH-quinone oxidoreductase subunit D from Agrobacterium fabrum (strain C58 / ATCC 33970) (Agrobacterium tumefaciens (strain C58)).